A 565-amino-acid chain; its full sequence is Atlastin-2 (565 aa).

Over 1–458 (MVLKKGVKFF…NIFYAARTPA (458 aa)) the chain is Cytoplasmic. The 246-residue stretch at 73–318 (DLNIVVVSVA…LVPLLLAPEN (246 aa)) folds into the GB1/RHD3-type G domain. Positions 86, 87, 88, 89, 90, 91, 157, 226, and 227 each coordinate GDP. GTP-binding residues include R86, K87, G88, K89, S90, and F91. S90 contributes to the Mg(2+) binding site. GTP-binding residues include R226 and D227. Positions 238 to 266 (LEGGKQFLEKRLQVKKNQHEELQNVRKHI) form a coiled coil. K252 carries the N6-methyllysine modification. The GDP site is built by V285 and N288. V285 provides a ligand contact to GTP. The tract at residues 356–447 (MLQATAEANN…YANFIKHNDG (92 aa)) is 3HB (three-helix bundle) domain. Positions 448 to 456 (KNIFYAART) are linker. Residues 459–479 (TLFAVMFAMYIISGLTGFIGL) form a helical membrane-spanning segment. Residues 480–481 (NS) lie on the Lumenal side of the membrane. A helical membrane pass occupies residues 482 to 502 (IAVLCNLVMGLALTFLCTWAY). Over 503–565 (VKYSGEFREI…VSHHARLKTD (63 aa)) the chain is Cytoplasmic. An autoinhibitory domain region spans residues 529 to 565 (KPLGDNLMEENIRQSVTNSIKAGLTDQVSHHARLKTD).

The protein belongs to the TRAFAC class dynamin-like GTPase superfamily. GB1/RHD3 GTPase family. GB1 subfamily. In terms of assembly, monomeric and homodimeric. The homodimer, transiently formed by two molecules on opposing membranes, is the active form mediating ER membrane fusion. Interacts with REEP5 and RTN3; these proteins are involved in endoplasmic reticulum tubular network organization. Interacts with ZFYVE27; both proteins are involved in endoplasmic reticulum tubular network organization.

The protein resides in the endoplasmic reticulum membrane. It carries out the reaction GTP + H2O = GDP + phosphate + H(+). Its function is as follows. Atlastin-2 (ATL2) is a membrane-anchored GTPase that mediates the GTP-dependent fusion of endoplasmic reticulum (ER) membranes, maintaining the continuous ER network. It facilitates the formation of three-way junctions where ER tubules intersect. Two atlastin-2 on neighboring ER tubules bind GTP and form loose homodimers through the GB1/RHD3-type G domains and 3HB regions. Upon GTP hydrolysis, the 3HB regions tighten, pulling the membranes together to drive their fusion. After fusion, the homodimer disassembles upon release of inorganic phosphate (Pi). Subsequently, GDP dissociates, resetting the monomers to a conformation ready for a new fusion cycle. The chain is Atlastin-2 from Macaca fascicularis (Crab-eating macaque).